We begin with the raw amino-acid sequence, 165 residues long: Protein FAM219A (165 aa).

Residue Met1 is modified to N-acetylmethionine. The interval 1–114 (MMEEIDRFQV…SRYSSSGYSS (114 aa)) is disordered. Residues 32 to 44 (CDAREEKQRELAR) are compositionally biased toward basic and acidic residues. The span at 49 to 63 (KNGSMGSPVNQQPKK) shows a compositional bias: polar residues. Phosphoserine is present on residues Ser55 and Ser85. Thr96 is modified (phosphothreonine). 2 positions are modified to phosphoserine: Ser98 and Ser105. The segment covering 105–114 (SRYSSSGYSS) has biased composition (low complexity).

This sequence belongs to the FAM219 family.

This is Protein FAM219A (FAM219A) from Macaca fascicularis (Crab-eating macaque).